The sequence spans 578 residues: Lysine--tRNA ligase (578 aa).

Positions 414 and 421 each coordinate Mg(2+).

The protein belongs to the class-II aminoacyl-tRNA synthetase family. As to quaternary structure, homodimer. Mg(2+) serves as cofactor.

The protein resides in the cytoplasm. It catalyses the reaction tRNA(Lys) + L-lysine + ATP = L-lysyl-tRNA(Lys) + AMP + diphosphate. The protein is Lysine--tRNA ligase of Porphyromonas gingivalis (strain ATCC 33277 / DSM 20709 / CIP 103683 / JCM 12257 / NCTC 11834 / 2561).